The sequence spans 1036 residues: Nitrogen catabolic enzyme regulatory protein (1036 aa).

Positions 1–17 (MAASTTTPTATTRPFFT) are enriched in low complexity. Disordered stretches follow at residues 1–126 (MAAS…HTQS), 207–240 (TDRT…SQGS), 256–298 (TPAG…QSQH), 318–351 (GYLP…HVSA), 590–743 (SSQG…PTTC), 792–976 (RGSG…PTTQ), and 1000–1028 (GMPN…TGAE). A compositionally biased stretch (basic and acidic residues) spans 23-34 (TEHDFRFPRRPG). The span at 45 to 56 (AAMSSSSANNNH) shows a compositional bias: low complexity. 3 consecutive repeat copies span residues 49 to 55 (SSSANNN), 87 to 92 (SSSNNN), and 105 to 110 (SSSNNN). The interval 49–110 (SSSANNNHNQ…INHQSSSNNN (62 aa)) is 3 X approximate repeats. Low complexity predominate over residues 100–114 (NINHQSSSNNNISKN). Residues 652–661 (PRSQSQSFRQ) are compositionally biased toward polar residues. Residues 703–714 (SSGLSSVPASRP) are compositionally biased toward low complexity. Polar residues predominate over residues 723–736 (QGSTTNLQGAAGNS). A GATA-type zinc finger spans residues 743–767 (CTNCFTQTTPLWRRNPDGQPLCNAC). Positions 802–827 (GTSTRSKKNASMSAAARKNSTLSITS) are enriched in polar residues. Low complexity-rich tracts occupy residues 828–861 (NANN…ASGP) and 868–899 (AGST…SAPP). A compositionally biased stretch (polar residues) spans 927–961 (SAGSDQPVSAGAVSSSGMDVDSPANSTGSNETMPT). Low complexity predominate over residues 1000–1023 (GMPNGQAGQMMGASSSSGPGSGPS).

Interacts with nmr.

The protein localises to the nucleus. Its function is as follows. Major nitrogen regulatory protein. During conditions of nitrogen limitation it turns on the expression of genes for enzymes which are required for the use of a variety of secondary nitrogen sources, including nitrates, purines, amino acids, and proteins. The sequence is that of Nitrogen catabolic enzyme regulatory protein (nit-2) from Neurospora crassa (strain ATCC 24698 / 74-OR23-1A / CBS 708.71 / DSM 1257 / FGSC 987).